The primary structure comprises 234 residues: Large ribosomal subunit protein uL1 (234 aa).

This sequence belongs to the universal ribosomal protein uL1 family. In terms of assembly, part of the 50S ribosomal subunit.

Functionally, binds directly to 23S rRNA. The L1 stalk is quite mobile in the ribosome, and is involved in E site tRNA release. In terms of biological role, protein L1 is also a translational repressor protein, it controls the translation of the L11 operon by binding to its mRNA. In Klebsiella pneumoniae subsp. pneumoniae (strain ATCC 700721 / MGH 78578), this protein is Large ribosomal subunit protein uL1.